We begin with the raw amino-acid sequence, 307 residues long: 4-hydroxy-3-methylbut-2-enyl diphosphate reductase (307 aa).

Residue cysteine 13 coordinates [4Fe-4S] cluster. Residues histidine 42 and histidine 75 each contribute to the (2E)-4-hydroxy-3-methylbut-2-enyl diphosphate site. Residues histidine 42 and histidine 75 each coordinate dimethylallyl diphosphate. Positions 42 and 75 each coordinate isopentenyl diphosphate. Cysteine 97 is a binding site for [4Fe-4S] cluster. Residue histidine 125 participates in (2E)-4-hydroxy-3-methylbut-2-enyl diphosphate binding. Histidine 125 contributes to the dimethylallyl diphosphate binding site. Residue histidine 125 participates in isopentenyl diphosphate binding. Glutamate 127 functions as the Proton donor in the catalytic mechanism. Threonine 165 serves as a coordination point for (2E)-4-hydroxy-3-methylbut-2-enyl diphosphate. Cysteine 195 contacts [4Fe-4S] cluster. The (2E)-4-hydroxy-3-methylbut-2-enyl diphosphate site is built by serine 223, serine 224, asparagine 225, and serine 267. Residues serine 223, serine 224, asparagine 225, and serine 267 each coordinate dimethylallyl diphosphate. Isopentenyl diphosphate is bound by residues serine 223, serine 224, asparagine 225, and serine 267.

The protein belongs to the IspH family. [4Fe-4S] cluster serves as cofactor.

It catalyses the reaction isopentenyl diphosphate + 2 oxidized [2Fe-2S]-[ferredoxin] + H2O = (2E)-4-hydroxy-3-methylbut-2-enyl diphosphate + 2 reduced [2Fe-2S]-[ferredoxin] + 2 H(+). It carries out the reaction dimethylallyl diphosphate + 2 oxidized [2Fe-2S]-[ferredoxin] + H2O = (2E)-4-hydroxy-3-methylbut-2-enyl diphosphate + 2 reduced [2Fe-2S]-[ferredoxin] + 2 H(+). It participates in isoprenoid biosynthesis; dimethylallyl diphosphate biosynthesis; dimethylallyl diphosphate from (2E)-4-hydroxy-3-methylbutenyl diphosphate: step 1/1. Its pathway is isoprenoid biosynthesis; isopentenyl diphosphate biosynthesis via DXP pathway; isopentenyl diphosphate from 1-deoxy-D-xylulose 5-phosphate: step 6/6. In terms of biological role, catalyzes the conversion of 1-hydroxy-2-methyl-2-(E)-butenyl 4-diphosphate (HMBPP) into a mixture of isopentenyl diphosphate (IPP) and dimethylallyl diphosphate (DMAPP). Acts in the terminal step of the DOXP/MEP pathway for isoprenoid precursor biosynthesis. The sequence is that of 4-hydroxy-3-methylbut-2-enyl diphosphate reductase from Chlamydia trachomatis serovar L2 (strain ATCC VR-902B / DSM 19102 / 434/Bu).